Reading from the N-terminus, the 125-residue chain is Classical arabinogalactan protein 27 (125 aa).

An N-terminal signal peptide occupies residues 1-21; that stretch reads MASSILLTLITFIFLSSLSLS. A compositionally biased stretch (low complexity) spans 20-36; that stretch reads LSSPTTNTIPSSQTISP. Positions 20 to 95 are disordered; that stretch reads LSSPTTNTIP…ASPPASSLAS (76 aa). Polar residues predominate over residues 53–66; that stretch reads AVSSTQTIPSSSTL. A compositionally biased stretch (low complexity) spans 77 to 95; the sequence is DPDPAFAPSASPPASSLAS. Ser98 carries the GPI-anchor amidated serine lipid modification. Positions 99–125 are cleaved as a propeptide — removed in mature form; that stretch reads QAPGVFIYFVFAAVYCFSLRLLAVSAI.

This sequence belongs to the classical AGP family. O-glycosylated on the hydroxyproline residues.

It is found in the cell membrane. Proteoglycan that seems to be implicated in diverse developmental roles such as differentiation, cell-cell recognition, embryogenesis and programmed cell death. This is Classical arabinogalactan protein 27 (AGP27) from Arabidopsis thaliana (Mouse-ear cress).